A 38-amino-acid chain; its full sequence is Non-specific lipid-transfer protein P2 (38 aa).

This sequence belongs to the plant LTP family.

It is found in the secreted. Plant non-specific lipid-transfer proteins transfer phospholipids as well as galactolipids across membranes. May play a role in wax or cutin deposition in the cell walls of expanding epidermal cells and certain secretory tissues. This chain is Non-specific lipid-transfer protein P2, found in Vitis sp. (Grape).